The sequence spans 509 residues: Maturase K (509 aa).

The protein belongs to the intron maturase 2 family. MatK subfamily.

It localises to the plastid. The protein localises to the chloroplast. Usually encoded in the trnK tRNA gene intron. Probably assists in splicing its own and other chloroplast group II introns. The sequence is that of Maturase K from Nicotiana alata (Winged tobacco).